Reading from the N-terminus, the 937-residue chain is Isoleucine--tRNA ligase (937 aa).

Residues 58–68 carry the 'HIGH' region motif; sequence PYANGHIHLGT. E566 lines the L-isoleucyl-5'-AMP pocket. A 'KMSKS' region motif is present at residues 607-611; sequence KMSKS. Residue K610 coordinates ATP. Residues C906, C909, C925, and C928 each contribute to the Zn(2+) site.

This sequence belongs to the class-I aminoacyl-tRNA synthetase family. IleS type 1 subfamily. In terms of assembly, monomer. Requires Zn(2+) as cofactor.

The protein localises to the cytoplasm. The enzyme catalyses tRNA(Ile) + L-isoleucine + ATP = L-isoleucyl-tRNA(Ile) + AMP + diphosphate. In terms of biological role, catalyzes the attachment of isoleucine to tRNA(Ile). As IleRS can inadvertently accommodate and process structurally similar amino acids such as valine, to avoid such errors it has two additional distinct tRNA(Ile)-dependent editing activities. One activity is designated as 'pretransfer' editing and involves the hydrolysis of activated Val-AMP. The other activity is designated 'posttransfer' editing and involves deacylation of mischarged Val-tRNA(Ile). In Lawsonia intracellularis (strain PHE/MN1-00), this protein is Isoleucine--tRNA ligase.